The primary structure comprises 186 residues: Mitoferrin-2A (186 aa).

Residues 75–163 form a Solcar repeat; it reads SNVTTHMLAG…FACYEKLKKT (89 aa). The next 3 helical transmembrane spans lie at 77–96, 137–157, and 172–185; these read VTTHMLAGAVAGVMEHCLMY, RGLNVTATGAGPAHALYFACY, and GNSHIANGTDYSCP.

This sequence belongs to the mitochondrial carrier (TC 2.A.29) family.

The protein resides in the mitochondrion inner membrane. It catalyses the reaction Fe(2+)(in) = Fe(2+)(out). Functionally, mitochondrial iron transporter that mediates iron uptake. Probably required for heme synthesis of hemoproteins and Fe-S cluster assembly in non-erythroid cells. The sequence is that of Mitoferrin-2A (slc25a28-a) from Xenopus laevis (African clawed frog).